Consider the following 392-residue polypeptide: Methylthioribose-1-phosphate isomerase (392 aa).

The active-site Proton donor is aspartate 267.

This sequence belongs to the eIF-2B alpha/beta/delta subunits family. MtnA subfamily.

The protein resides in the cytoplasm. The protein localises to the nucleus. The enzyme catalyses 5-(methylsulfanyl)-alpha-D-ribose 1-phosphate = 5-(methylsulfanyl)-D-ribulose 1-phosphate. It participates in amino-acid biosynthesis; L-methionine biosynthesis via salvage pathway; L-methionine from S-methyl-5-thio-alpha-D-ribose 1-phosphate: step 1/6. Its function is as follows. Catalyzes the interconversion of methylthioribose-1-phosphate (MTR-1-P) into methylthioribulose-1-phosphate (MTRu-1-P). This chain is Methylthioribose-1-phosphate isomerase, found in Ajellomyces dermatitidis (strain ER-3 / ATCC MYA-2586) (Blastomyces dermatitidis).